A 157-amino-acid polypeptide reads, in one-letter code: Phospholipase A2 phaiodactylipin (157 aa).

The Ca(2+) site is built by Trp34 and Gly36. 5 disulfides stabilise this stretch: Cys35-Cys56, Cys55-Cys94, Cys62-Cys87, Cys85-Cys127, and Cys132-Cys143. Asn43 carries an N-linked (GlcNAc...) asparagine glycan. The active site involves His59. Ca(2+) is bound at residue Asp60. Asp88 is an active-site residue. Asn101 carries an N-linked (GlcNAc...) asparagine glycan. Residues 134-139 (DEKSAR) constitute a propeptide, removed in mature form. Residue Asn153 is glycosylated (N-linked (GlcNAc...) asparagine).

It belongs to the phospholipase A2 family. Group III subfamily. Heterodimer composed of a small subunit and a large subunit; disulfide-linked. Ca(2+) is required as a cofactor. As to expression, expressed by the venom gland.

It is found in the secreted. The enzyme catalyses a 1,2-diacyl-sn-glycero-3-phosphocholine + H2O = a 1-acyl-sn-glycero-3-phosphocholine + a fatty acid + H(+). Its function is as follows. Scorpion venom phospholipase A2 (PLA2) that is lethal to crickets and crustaceae. Causes inflammation in mice and lysis of human erythrocytes. Has a mild anticoagulant effect on human platelets. PLA2 catalyzes the calcium-dependent hydrolysis of the 2-acyl groups in 3-sn-phosphoglycerides. The sequence is that of Phospholipase A2 phaiodactylipin from Anuroctonus phaiodactylus (Mafia scorpion).